The primary structure comprises 360 residues: Biotin synthase (360 aa).

The region spanning 83 to 315 is the Radical SAM core domain; it reads FCGKYFDLCT…KSFLRYCGGR (233 aa). [4Fe-4S] cluster-binding residues include Cys101, Cys105, and Cys108. The [2Fe-2S] cluster site is built by Ser145, Cys180, Cys240, and Arg310.

This sequence belongs to the radical SAM superfamily. Biotin synthase family. In terms of assembly, homodimer. Requires [4Fe-4S] cluster as cofactor. [2Fe-2S] cluster serves as cofactor.

It catalyses the reaction (4R,5S)-dethiobiotin + (sulfur carrier)-SH + 2 reduced [2Fe-2S]-[ferredoxin] + 2 S-adenosyl-L-methionine = (sulfur carrier)-H + biotin + 2 5'-deoxyadenosine + 2 L-methionine + 2 oxidized [2Fe-2S]-[ferredoxin]. It functions in the pathway cofactor biosynthesis; biotin biosynthesis; biotin from 7,8-diaminononanoate: step 2/2. Catalyzes the conversion of dethiobiotin (DTB) to biotin by the insertion of a sulfur atom into dethiobiotin via a radical-based mechanism. The chain is Biotin synthase from Fusobacterium nucleatum subsp. nucleatum (strain ATCC 25586 / DSM 15643 / BCRC 10681 / CIP 101130 / JCM 8532 / KCTC 2640 / LMG 13131 / VPI 4355).